Here is a 176-residue protein sequence, read N- to C-terminus: NAD(P)H-quinone oxidoreductase subunit 6, chloroplastic (176 aa).

Transmembrane regions (helical) follow at residues 10–30, 32–52, 63–83, 92–112, and 152–172; these read FILV…VFFT, TIFS…FYIL, LLIY…FMNG, VWTV…ISQI, and FFLP…GAIF.

It belongs to the complex I subunit 6 family. In terms of assembly, NDH is composed of at least 16 different subunits, 5 of which are encoded in the nucleus.

The protein localises to the plastid. The protein resides in the chloroplast thylakoid membrane. The catalysed reaction is a plastoquinone + NADH + (n+1) H(+)(in) = a plastoquinol + NAD(+) + n H(+)(out). It catalyses the reaction a plastoquinone + NADPH + (n+1) H(+)(in) = a plastoquinol + NADP(+) + n H(+)(out). In terms of biological role, NDH shuttles electrons from NAD(P)H:plastoquinone, via FMN and iron-sulfur (Fe-S) centers, to quinones in the photosynthetic chain and possibly in a chloroplast respiratory chain. The immediate electron acceptor for the enzyme in this species is believed to be plastoquinone. Couples the redox reaction to proton translocation, and thus conserves the redox energy in a proton gradient. The polypeptide is NAD(P)H-quinone oxidoreductase subunit 6, chloroplastic (ndhG) (Phaseolus vulgaris (Kidney bean)).